Here is a 488-residue protein sequence, read N- to C-terminus: N-succinylglutamate 5-semialdehyde dehydrogenase 2 (488 aa).

221-226 (GSSNTG) lines the NAD(+) pocket. Residues Glu-244 and Cys-278 contribute to the active site.

The protein belongs to the aldehyde dehydrogenase family. AstD subfamily.

It carries out the reaction N-succinyl-L-glutamate 5-semialdehyde + NAD(+) + H2O = N-succinyl-L-glutamate + NADH + 2 H(+). The protein operates within amino-acid degradation; L-arginine degradation via AST pathway; L-glutamate and succinate from L-arginine: step 4/5. Catalyzes the NAD-dependent reduction of succinylglutamate semialdehyde into succinylglutamate. The protein is N-succinylglutamate 5-semialdehyde dehydrogenase 2 of Pseudoalteromonas translucida (strain TAC 125).